A 272-amino-acid chain; its full sequence is Aurora kinase (272 aa).

In terms of domain architecture, Protein kinase spans phenylalanine 10–isoleucine 263. ATP is bound by residues leucine 16 to valine 24 and lysine 39. Catalysis depends on aspartate 134, which acts as the Proton acceptor.

The protein belongs to the protein kinase superfamily. Ser/Thr protein kinase family. Aurora subfamily.

The protein resides in the nucleus. It is found in the cytoplasm. It localises to the cytoskeleton. Its subcellular location is the spindle. The protein localises to the chromosome. The protein resides in the centromere. It is found in the kinetochore. The enzyme catalyses L-seryl-[protein] + ATP = O-phospho-L-seryl-[protein] + ADP + H(+). The catalysed reaction is L-threonyl-[protein] + ATP = O-phospho-L-threonyl-[protein] + ADP + H(+). In terms of biological role, component of the chromosomal passenger complex (CPC), a complex that acts as a key regulator of chromosome segregation and cytokinesis. Has a role in error-correction of aberrent kinetochore-microtubule attachments to ensure that sister kinetochores become bioriented and connect to opposite poles by promoting spindle assembly checkpoint signaling. This is Aurora kinase (IPL1) from Encephalitozoon cuniculi (strain GB-M1) (Microsporidian parasite).